A 198-amino-acid chain; its full sequence is Recombination protein RecR (198 aa).

The C4-type zinc-finger motif lies at 58 to 73; that stretch reads CSVCNNLTEKDPCDFC. Residues 81–175 form the Toprim domain; that stretch reads NLICVVESPK…KVTRIAHGLP (95 aa).

The protein belongs to the RecR family.

In terms of biological role, may play a role in DNA repair. It seems to be involved in an RecBC-independent recombinational process of DNA repair. It may act with RecF and RecO. The sequence is that of Recombination protein RecR from Halothermothrix orenii (strain H 168 / OCM 544 / DSM 9562).